A 643-amino-acid chain; its full sequence is Threonine--tRNA ligase (643 aa).

The 61-residue stretch at 1–61 folds into the TGS domain; that stretch reads MPIITLPDGA…SVNANINIIT (61 aa). The tract at residues 242-533 is catalytic; it reads DHRKIGKKLD…LIEEYEGKFP (292 aa). Zn(2+) contacts are provided by Cys333, His384, and His510.

Belongs to the class-II aminoacyl-tRNA synthetase family. As to quaternary structure, homodimer. Requires Zn(2+) as cofactor.

It localises to the cytoplasm. It carries out the reaction tRNA(Thr) + L-threonine + ATP = L-threonyl-tRNA(Thr) + AMP + diphosphate + H(+). Functionally, catalyzes the attachment of threonine to tRNA(Thr) in a two-step reaction: L-threonine is first activated by ATP to form Thr-AMP and then transferred to the acceptor end of tRNA(Thr). Also edits incorrectly charged L-seryl-tRNA(Thr). The sequence is that of Threonine--tRNA ligase from Prochlorococcus marinus (strain SARG / CCMP1375 / SS120).